The sequence spans 204 residues: Imidazole glycerol phosphate synthase subunit HisH (204 aa).

The Glutamine amidotransferase type-1 domain occupies 1-204 (MIKIVDYGLG…MTLLKNFSEI (204 aa)). Cys-80 (nucleophile) is an active-site residue. Active-site residues include His-186 and Glu-188.

Heterodimer of HisH and HisF.

The protein localises to the cytoplasm. It carries out the reaction 5-[(5-phospho-1-deoxy-D-ribulos-1-ylimino)methylamino]-1-(5-phospho-beta-D-ribosyl)imidazole-4-carboxamide + L-glutamine = D-erythro-1-(imidazol-4-yl)glycerol 3-phosphate + 5-amino-1-(5-phospho-beta-D-ribosyl)imidazole-4-carboxamide + L-glutamate + H(+). The enzyme catalyses L-glutamine + H2O = L-glutamate + NH4(+). It participates in amino-acid biosynthesis; L-histidine biosynthesis; L-histidine from 5-phospho-alpha-D-ribose 1-diphosphate: step 5/9. IGPS catalyzes the conversion of PRFAR and glutamine to IGP, AICAR and glutamate. The HisH subunit catalyzes the hydrolysis of glutamine to glutamate and ammonia as part of the synthesis of IGP and AICAR. The resulting ammonia molecule is channeled to the active site of HisF. The protein is Imidazole glycerol phosphate synthase subunit HisH of Bdellovibrio bacteriovorus (strain ATCC 15356 / DSM 50701 / NCIMB 9529 / HD100).